The chain runs to 320 residues: Ferrochelatase (320 aa).

Fe cation contacts are provided by His-194 and Glu-272.

The protein belongs to the ferrochelatase family.

Its subcellular location is the cytoplasm. It carries out the reaction heme b + 2 H(+) = protoporphyrin IX + Fe(2+). Its pathway is porphyrin-containing compound metabolism; protoheme biosynthesis; protoheme from protoporphyrin-IX: step 1/1. Catalyzes the ferrous insertion into protoporphyrin IX. In Desulfotalea psychrophila (strain LSv54 / DSM 12343), this protein is Ferrochelatase.